We begin with the raw amino-acid sequence, 140 residues long: MAGWNAYIDNLMADGTCQDAAIVGYKDSPSVWAAVPGKTFVNITPAEVGVLVGKDRSSFYVNGLTLGGQKCSVIRDSLLQDGEFSMDLRTKSTGGAPTFNVTVTKTDKTLVLLMGKEGVHGGLINKKCYEMASHLRRSQY.

Ala-2 carries the N-acetylalanine modification. Ser-28 is modified (phosphoserine). A Glycyl lysine isopeptide (Lys-Gly) (interchain with G-Cter in SUMO2); alternate cross-link involves residue Lys-54. Lys-54 is covalently cross-linked (Glycyl lysine isopeptide (Lys-Gly) (interchain with G-Cter in ubiquitin); alternate). A phosphoserine mark is found at Ser-57 and Ser-85. Residues Lys-105 and Lys-108 each carry the N6-acetyllysine modification. Tyr-129 bears the Phosphotyrosine mark. Ser-138 bears the Phosphoserine; by ROCK1 mark.

This sequence belongs to the profilin family. Found in a complex with XPO6, Ran, ACTB and PFN1. Interacts with ACTB. Interacts with VASP. Interacts with HTT. Interacts with SH3BGRL. Occurs in many kinds of cells as a complex with monomeric actin in a 1:1 ratio. Interacts with ACTMAP. Phosphorylation at Ser-138 reduces its affinity for G-actin and blocks its interaction with HTT, reducing its ability to inhibit androgen receptor (AR) and HTT aggregation. As to expression, expressed in epididymis (at protein level).

The protein resides in the cytoplasm. Its subcellular location is the cytoskeleton. Functionally, binds to actin and affects the structure of the cytoskeleton. At high concentrations, profilin prevents the polymerization of actin, whereas it enhances it at low concentrations. By binding to PIP2, it inhibits the formation of IP3 and DG. Inhibits androgen receptor (AR) and HTT aggregation and binding of G-actin is essential for its inhibition of AR. This is Profilin-1 (PFN1) from Homo sapiens (Human).